The chain runs to 302 residues: Nucleotide-binding protein RHOS4_02640 (302 aa).

Position 15-22 (15-22) interacts with ATP; it reads GPSGAGRT. 62 to 65 serves as a coordination point for GTP; sequence DVRN.

Belongs to the RapZ-like family.

In terms of biological role, displays ATPase and GTPase activities. This is Nucleotide-binding protein RHOS4_02640 from Cereibacter sphaeroides (strain ATCC 17023 / DSM 158 / JCM 6121 / CCUG 31486 / LMG 2827 / NBRC 12203 / NCIMB 8253 / ATH 2.4.1.) (Rhodobacter sphaeroides).